A 643-amino-acid polypeptide reads, in one-letter code: Thioredoxin reductase 3 (643 aa).

A disordered region spans residues 1-53 (MERSPPQSPGPGKAGDAPNRRSGHVRGARVLSPPGRRARLSSPGPSRSSEARE). Residue R26 is modified to Asymmetric dimethylarginine; alternate. Position 26 is an omega-N-methylarginine; alternate (R26). Phosphoserine is present on residues S41 and S42. The region spanning 56 to 156 (RRHLVGLIER…KLLQEDLAYD (101 aa)) is the Glutaredoxin domain. An FAD-binding site is contributed by 158 to 187 (DLIIIGGGSGGLSCAKEAAILGKKVMVLDF). The cysteines at positions 203 and 208 are disulfide-linked. K379 is subject to N6-succinyllysine. H616 acts as the Proton acceptor in catalysis. A cross-link (cysteinyl-selenocysteine (Cys-Sec)) is located at residues 641–642 (CU). A non-standard amino acid (selenocysteine) is located at residue U642.

Belongs to the class-I pyridine nucleotide-disulfide oxidoreductase family. As to quaternary structure, homodimer. The cofactor is FAD.

The protein resides in the cytoplasm. Its subcellular location is the nucleus. The protein localises to the microsome. It localises to the endoplasmic reticulum. It catalyses the reaction [thioredoxin]-dithiol + NADP(+) = [thioredoxin]-disulfide + NADPH + H(+). Displays thioredoxin reductase, glutaredoxin and glutathione reductase activities. Catalyzes disulfide bond isomerization. Promotes disulfide bond formation between GPX4 and various sperm proteins and may play a role in sperm maturation by promoting formation of sperm structural components. This Homo sapiens (Human) protein is Thioredoxin reductase 3.